The primary structure comprises 177 residues: Ribosome maturation factor RimP (177 aa).

It belongs to the RimP family.

It is found in the cytoplasm. Functionally, required for maturation of 30S ribosomal subunits. The sequence is that of Ribosome maturation factor RimP from Streptococcus sanguinis (strain SK36).